A 307-amino-acid chain; its full sequence is Type 2A encapsulin shell protein (307 aa).

It belongs to the encapsulin family. Family 2A subfamily. As to quaternary structure, the encapsulin nanocompartment is formed by 60 subunits; monomers form pentamers which assemble to form shells. There are 12 charged pores where the pentamers meet as well as 3-fold axis channels and dimer channels. Isolated from bacteria in a complex with cysteine desulfurase (AC Q9KII6).

The protein localises to the encapsulin nanocompartment. Its subcellular location is the cell membrane. In terms of biological role, shell component of a type 2A encapsulin nanocompartment. Forms encapsulin nanocompartments about 24 nm in diameter from 60 monomers, probably involved in sulfur metabolism. Probably encapsulates cysteine desulfurase. In Mycolicibacterium paratuberculosis (strain ATCC BAA-968 / K-10) (Mycobacterium paratuberculosis), this protein is Type 2A encapsulin shell protein.